The primary structure comprises 625 residues: tRNA uridine 5-carboxymethylaminomethyl modification enzyme MnmG (625 aa).

FAD-binding positions include 13–18 (GGGHAG), Val125, and Ser182. 276-290 (GPRYCPSIEDKITRF) lines the NAD(+) pocket. Gln373 is an FAD binding site.

The protein belongs to the MnmG family. In terms of assembly, homodimer. Heterotetramer of two MnmE and two MnmG subunits. Requires FAD as cofactor.

The protein resides in the cytoplasm. Its function is as follows. NAD-binding protein involved in the addition of a carboxymethylaminomethyl (cmnm) group at the wobble position (U34) of certain tRNAs, forming tRNA-cmnm(5)s(2)U34. This chain is tRNA uridine 5-carboxymethylaminomethyl modification enzyme MnmG, found in Lactococcus lactis subsp. lactis (strain IL1403) (Streptococcus lactis).